Reading from the N-terminus, the 1552-residue chain is Nonribosomal peptide synthetase acrB (1552 aa).

The interval 129 to 564 (ASFAQERIWF…PVANLAIFDE (436 aa)) is condensation. The interval 594–999 (RHCKAHPRDV…RMEGSAQVKI (406 aa)) is adenylation. One can recognise a Carrier domain in the interval 1110 to 1186 (APLGVEEEVM…AMARLLQPQE (77 aa)). Ser-1146 carries the O-(pantetheine 4'-phosphoryl)serine modification. The segment at 1226-1464 (LTGATGFLGR…DFVGVDAVAS (239 aa)) is thiolester reductase (R) domain.

The protein belongs to the NRP synthetase family.

The protein operates within secondary metabolite biosynthesis. In terms of biological role, nonribosomal peptide synthetase; part of the cluster that mediates the biosynthesis of acurin A, a highly reduced polyketide coupled to a serine via a peptide bond. The activities of the highly reducing polyketide synthase acrA and the nonribosomal peptide synthetase acrB are collectively responsible for the synthesis of the acurin A core structure with a heptaketide backbone produced by acrA covalently fused to a L-serine by acrB. After the formation of the PK-NRP hybrid product, it is detached from acrB by reductive release to set up the formation of the lactam ring by aldol condensation. The hydrolyase acrC then catalyzes water loss to generate a double bond in the ring. This double bond is probably reduced, which is followed by three oxidations at C-22 to generate the carboxylic acid moiety, involving probably the FAD-binding monooxygenase acrE and the cytochrome P450 monooxygenases acrD and acrF. Finally, a last methylation step performed by the O-methyltransferase acrG leads to the production of acurin A. This Aspergillus aculeatus (strain ATCC 16872 / CBS 172.66 / WB 5094) protein is Nonribosomal peptide synthetase acrB.